The primary structure comprises 630 residues: tRNA uridine 5-carboxymethylaminomethyl modification enzyme MnmG (630 aa).

Residue 13 to 18 (GGGHAG) participates in FAD binding. NAD(+) is bound at residue 273-287 (GPRYCPSIEDKVNRF).

It belongs to the MnmG family. In terms of assembly, homodimer. Heterotetramer of two MnmE and two MnmG subunits. It depends on FAD as a cofactor.

Its subcellular location is the cytoplasm. NAD-binding protein involved in the addition of a carboxymethylaminomethyl (cmnm) group at the wobble position (U34) of certain tRNAs, forming tRNA-cmnm(5)s(2)U34. This is tRNA uridine 5-carboxymethylaminomethyl modification enzyme MnmG from Teredinibacter turnerae (strain ATCC 39867 / T7901).